A 477-amino-acid chain; its full sequence is 3-isopropylmalate dehydratase large subunit (477 aa).

3 residues coordinate [4Fe-4S] cluster: Cys358, Cys419, and Cys422.

This sequence belongs to the aconitase/IPM isomerase family. LeuC type 1 subfamily. As to quaternary structure, heterodimer of LeuC and LeuD. It depends on [4Fe-4S] cluster as a cofactor.

The enzyme catalyses (2R,3S)-3-isopropylmalate = (2S)-2-isopropylmalate. It functions in the pathway amino-acid biosynthesis; L-leucine biosynthesis; L-leucine from 3-methyl-2-oxobutanoate: step 2/4. Catalyzes the isomerization between 2-isopropylmalate and 3-isopropylmalate, via the formation of 2-isopropylmaleate. The protein is 3-isopropylmalate dehydratase large subunit of Acinetobacter baylyi (strain ATCC 33305 / BD413 / ADP1).